A 568-amino-acid polypeptide reads, in one-letter code: Potassium-transporting ATPase potassium-binding subunit (568 aa).

10 helical membrane passes run Ala-7 to Leu-27, Ser-65 to Leu-85, Ala-135 to Val-155, Val-177 to Gly-197, Leu-254 to Phe-274, Ala-286 to Glu-306, Gly-383 to Gly-403, Met-422 to Leu-442, Leu-489 to Gly-509, and Leu-530 to Ala-550.

The protein belongs to the KdpA family. As to quaternary structure, the system is composed of three essential subunits: KdpA, KdpB and KdpC.

It is found in the cell inner membrane. Its function is as follows. Part of the high-affinity ATP-driven potassium transport (or Kdp) system, which catalyzes the hydrolysis of ATP coupled with the electrogenic transport of potassium into the cytoplasm. This subunit binds the periplasmic potassium ions and delivers the ions to the membrane domain of KdpB through an intramembrane tunnel. The polypeptide is Potassium-transporting ATPase potassium-binding subunit (Beijerinckia indica subsp. indica (strain ATCC 9039 / DSM 1715 / NCIMB 8712)).